A 191-amino-acid chain; its full sequence is UPF0312 protein Shewmr4_1178 (191 aa).

The first 22 residues, Met1–Ala22, serve as a signal peptide directing secretion.

Belongs to the UPF0312 family. Type 1 subfamily.

The protein resides in the periplasm. The protein is UPF0312 protein Shewmr4_1178 of Shewanella sp. (strain MR-4).